We begin with the raw amino-acid sequence, 300 residues long: Acetylglutamate kinase (300 aa).

Substrate-binding positions include 67–68, Arg-89, and Asn-194; that span reads GG.

The protein belongs to the acetylglutamate kinase family. ArgB subfamily.

The protein resides in the cytoplasm. The enzyme catalyses N-acetyl-L-glutamate + ATP = N-acetyl-L-glutamyl 5-phosphate + ADP. It participates in amino-acid biosynthesis; L-arginine biosynthesis; N(2)-acetyl-L-ornithine from L-glutamate: step 2/4. Catalyzes the ATP-dependent phosphorylation of N-acetyl-L-glutamate. The sequence is that of Acetylglutamate kinase from Saccharophagus degradans (strain 2-40 / ATCC 43961 / DSM 17024).